The primary structure comprises 85 residues: U4-theraphotoxin-Hhn1w (85 aa).

The signal sequence occupies residues 1–22; sequence MKVTLIAILTCAAVLALHTTAA. Positions 23 to 48 are excised as a propeptide; the sequence is EELEAESQLMEVGMPDTELAAVDEER. Intrachain disulfides connect Cys-52-Cys-66, Cys-56-Cys-77, and Cys-71-Cys-82.

The protein belongs to the neurotoxin 12 (Hwtx-2) family. 02 (Hwtx-2) subfamily. As to expression, expressed by the venom gland.

Its subcellular location is the secreted. Functionally, postsynaptic neurotoxin. This Cyriopagopus hainanus (Chinese bird spider) protein is U4-theraphotoxin-Hhn1w.